The following is a 7214-amino-acid chain: MPSISAAADSSAEFWKRNTAGMEISRLSHLTRSYEGQAQWRSYPLNPSIELQRLGAFCEAHRTSLLVILQAAWATVLGRFLATDTATFASCLENGDEAKHGVCSASWSQGATTLHELLEQLQQWHETSFTHQDIPLAELEQLLHVVPDTGLRVKHISSPSTSLSLSGPRHNRAIEVVAQVSPISVRISLEYNASALSSVYAQSIAGSLERSLQAVVNRGSTPVTQIDLCSKEDRESIFDWNAYVPVTISDCVHTRIERKALEQPHALAVAGSGGDMTYQQLNMQADNLAAYLQELGVGADSYVALCFEKSTLPIVAMLAVFKAGGAYVALNPAHPVKRQAVILSKINAQVILTGPGYAGTFPGLVKHSVEVTQDLLDQLAAERRATRLVRAARPETPAVVVFTSGSTGEPKGIVVEHRALVSSMIGHGTIMRLDSSTRALQFATYTFDLSVGEIFNTLMHGGCVCVPSEEERLDDLEGFIRRLEVNWALLTPTVLNMMTPANVPSVRTISTGGEPMKQDIIQAWADHVQLNNMYGPAETTILCAGRAALSPATPASNIGHALGARQWITNPMNPNQLCPIGAVGEVLIEGPGLARGYLHDEEKTNAAFVGNPDWLPKASPARRFYRSADLGFLSPDGTFNIVGRKDTQVKINGQRIELEEVEFNIKSLLNAGWQAVVAEVIKPKGYNDQSILGAFIQFEDDENDETELLGYISEGRRQQLRQLKEDLGLHLPAYMTPSVFVPMAHMPTTAHGKLDRRRLKDLAAGFSTEDLVSFSLAGSTNTAKREPVTETEKAVASLWSQVLKIPYESFGLNDNFFRLGGDSISAMKLSAAARSTGMSLTVAKIFGHPTLEAMSQIAVELSHTEIGSIKPFSLIDVENAFEFIDQLTLKWGLDRSSIEDAYPATALQEGLMAITQGEPGTYIYQNVYELPADIDLAKFCAAWESVVNTTEILRTTLLPTDTASTYQVVIKPSSIDWKYPASVEEYLKSDAQQTMLYGEPLARYALVPGTPGGSLSTFIWTAHHALYDGWSLPLLWKRVEEAYKGSGLSHQPHVAPFNRFIAHLRDMDAEATYAFWESYLSSSNPPKFPQLPYQTYKPRVNNIHQHEFSLTATSQSSGITTSTLIRAAWSLLMSQYTDAGDDIIIGVTVAGRNVDVPGISEMAAPMITTVPVRVQIDRDETVTELLTRVQTQTVEMMPFEHAGLQNIAKINRECRLACGFQNLLVVQPEEDESTSGSLGIKKIQSPEVGIYTYALVIQCLLRGDKVGVQVDFDDQVLSSWQVERICCQLEHLMGVLRASPNVKIGDLSLVSQKDYTQIMNWNHKLPVVEERCVHEIIRGQVLATPDAPAICSWDGDFTYAEVDRLSSRFARHLVSMGVGPETLVPHCFSKSAWTVIAMLAIIKAGGACVALDPGHPVDRLQAIINDAEAALVVTMPEHSHLFNGLVNKVVALSPQFFGSDDDLQSSETLPPRAGHKNPVFVLFTSGSTGKPKGIVIEHGMFASSAAAHSKAFGITAQSRVFQFAAHTFDVSVGDIFTSLMKGACICIPSDLERMNNVASAINRMKANYAFLTPTVANLLRPEQVPTLRTLTLGGEAPTRENIRTWADSLNLILCYGPAECSVYCSANPPATQQSNPAVLGHAIGGLIWLVDPVNHDKLTPVGCVGELVVQGAIVARGYLNEPEKTQSAFIQDPAWMPQTFPREYRRIYKTGDLARFNPDGSLSFVARKDTQAKVRGQRVELAEIEVHLSESPEIQHAMVAVPAAGPYKSRLVCILSLQELAQRSDGISRDSSRVALIQGSSDRSHAAQTASVVENRLAEKLPPYMIPAVWIPLKKMPLNLSGKIDRKLIKGWLEDVDEATYQSVAAMAAAEGTSLQQPTSDIEKKVQAAFSATLNIPVESVGLNTSFLSVGGDSISAMQVMSRLRSQNLRITVQDILKLRTVAALAGRAQYIEQSTTESSAPEAEVIDEWFELAPIQQLFFRMQPKGQNHFNQSFVLKLAQDVLQTELQRALEIVVQHHSMLRARFEQVDGSWSQKITNDVSGSFFMFPREEGSRERMMARFREAETLFDIKRGPMLTAQIWVAPESQYLFLAAHHLVIDLVSWRIILQDLEDVLRTGRINSTPTISFQNWAKLQREYVSQHLSKPDTWDLEAPTGDLAYWNMQGEANNWGDIVTESFTIDSQRTALLLGDCNIPLRTEPTDIMVAALLHSFRHAFSDRNVPAVYLEGHGREPWTSAIDVSRTVGWFTTMYPVSYETPEDNWLDAVKRLKDSRRKIAHNGWRYFTARSLLAGGMQDMEVVFNYLGLYQQLQRVDALFQESSITGTDCVEISPQMQRYSLFEIAAGVSNGRMEFTFEYNKKMSHRDTISSWINHYRQVLETGIDELMRQSELIPTLSDFPLLNLSYKDLDNLATSILPEAGVKSIDEIESLSPCSPMQLGLLMSQLKSEGAYEFFTIMEATAREGVDSAQLVAAWQQVIDRHPMLRTVFIKSAVPDRPYDQLVLKELRAQVVELRSDDPVHALRTLPQTAKLHQLAICHCENGRMFCKLEINHALIDGTSMAIIERDLKRAYSKKLSSVPPLAYVDYVSFLQEAKRAESVNFWNDYLQDAQPCQFPILNDGRDQSQALESINVELPGLTKETLSAFSERWGFTVANVVQTAWALVLRAFIGTDSVCYGYLTSGRDAPLDGIEDSVGPFINMLVCRLKFDPHEPALVALKNTQDGFLKAMSHQYVSLAEMQHALGVAAQGLFNTAMSFQRYSPEESMDLNLRTVYDYDPTEFNITVNVATREEGLQIDLTYWTSKLSSGQAVHLANTYSTVIMELLSNPETVLADVNMLSPLDRASLRDWNKELPFAVDRCMHEVIHQNARKRPHALALESWEAAYTYRDLDRASSRLARHLIKQGVSPDDCIPLCFEKSLYTIIALVAVLKAGGGFVLLDPKHPDDRLKGLLEDSKAKFLIVSPQTQDRCKDLISSLVVVSPKILDELPHADEDDIPPSTAVTPGDIMYVQFTSGSTGKPKGAVVHHRAACSSIEHHGKVMNYGPHSRIFQFSSYTFDAIILEAFTTLYHGGCVCIPSEEDRMSSMVQSMREMKVNNMFMTPTLARLFGPADVPSLTTLMLGGEPIPQDSINTWKDHVDLIGGYGPAECCVYCCYNPLSSSGFKPDVIGYPVGAVLWIVEADNHDRLVPVGAIGEIVVHGHTVGRGYLNDPTRTAASYISAPSWVADYGYPGEQTLYKTGDLGRYNSDGTLTIVGRKDTQVKVNGQRIELGEVEHCIKTEYPQVLQVAVDALKPEHANGRQILSAFLEFEAVEGSEEFQNKNSFLRAMNDKLRETMFEIEAILAQRLPPYMVPHLWFPLVTMPKSASGKTDRKVLKQLCNGLSKTELQQYSLASGSRKALETPMEETIAGLWKDLFGVSDIGSNDNFFRVGGDSIEAMKLAAAARAQGLSLSVADIFNYPKLDDMARIVVAAYGASAVAHKYDAPFSLVGGEESARSIVQKHIPHVQIDLVEDVYPSTSLQEGLLALTSSHSSAYVLQAPFLLPPNIDLDRFRDAWAKVVEANAILRTVIISTETQGTCQVTLRQSIEWSQASTLEEYLAQDRERPMGYGTALSRYGLTLDGYFVWTAHHSIYDGWSFALMLDEVEKRYKDESVVSRPLFAEYIRFLQRQQGKTDATAFWKSQLQDASSSSVFPQLPSSLYEVDVDRTFKYSFPFSTKSTVTASTLLSAAWGLTIGRLTNSSEVIYGSTRSGRNIDLAQATELMGPTIATVPIRISIDTSMSIEDFLAAVQNQATAAIPYEHLGLQNISKISPACKAACDFQNLFVVQPAVISDSTILGMKRVEIPTKGLHTYALNVECILTEEGTATLNFEYDGKVMQDYQIQRLAGQFHHVVCQLCENEDGRLKVGDVDAFSLDDEKQLRQWNARLKSFPEITRCAHDLVSERARLHPDLLAVTQSDGTSLTYDELEELSTLFARHLSTLKIGPGRIVPICLKKAVWVVVSILGVLKTGAAFVCLDPSSPSSRMHSIIEEVESEIVIVDPETKPIFNNHLQTLEIGAKSLDWIRSANASDMIFEVHRNPRDLMYVIFTSGSTGKPKGVMIEHASACSSFTYQGQEFGYDHESRVLQFSALTFDASLMEIFTTLCAGGCVCFPTEEEKQGDIVRAINNLRVNSVMLTPTVLRMIQPEDIPMVKHVVTGGEAVSHDIVQTWSSKVILKGVYGPTETSMICITADLVPGSSPANIGVPLGCRSWITLPDDHNHLAPIGSVGELLIQGPIVGRGYYKNQKQTQDVFIENPLWLQKRFGETGGGRLYKTGDLVYYAQNGDLMIVGRKDSQVKLHGQRIELGEIDHKMWSHPAVRQSSVVLPSQGPLKNRLVAVLTLDGTEERITTPHVLCPLSEEWKQYANSRIASIRQALRESLPSYMVPTVFVAVEKMPRQTSGKTDIKRVKKWVNELDEQTAEQALDIETTAPGLTVPGSEAEKVIQGAVSKVLNIPAEKIALNRSFISLGGDSITAIKLMNQLRDAGVNFSIKELLRAGSIGELAGRVTSISEGENVNPLLSLVSQKKEKKYSLLRLGDAEIEALLAQRLATIGLTDLTRVEDVYPCSPLQEGLLVAQTKGVGSYDVYNIYEVTTSKNASVSVNPHVLAKAWKEVVRRHQILRTIFIQGLEESTAFNQVVLREVHNAPFVIEDVKSNDAKALLQNLATPEYPAFEPWHSVTICSDANGTVCCGIRMHHGLFDASSMDIILREVAQAYNQRLSTPAPLYRDYISYLQGLQQGGNDGLAYWQEYLKDLEPCYFPSINEEALGTRTPQSLQFNVPGLSRILLFSARKNVTVSTILQTAWALVLRHYTSTEEICFGYLSHGRDIPLDGIDNIVGPMINMMVLRVILSGDRTLTDILEGTRDDVLNSLPHQHTSLAEIHHALDLQGRSAFNTTLSFASAAADAENYDGIAFKNLSGSGSTEYDIAVNASVVGEDLQIHFSYWSSALSPQQATAVAQAFTNFMDILTDSSDLPLRDIDFTSAAMRAQLLRWNATPYAPVHTTVHELFHRTALRYPENQAICSTDGSFTYSELDNLTTRFASFLREKGVGPEVLVPVCFNKSCWTIVSMLSILKAGGACVPLDPSHPPARIQEVSSRCEAKLILAAPHLVDRLPDCNATVISVTDGLMQGLPNLPSNFQIDLAKPANAAFVPFTSGSTGLPKGIILDHMGLCTMFEANASVVGIDHNTRTFQYAAYTFDVSIAETYITLTQGGCVCVPTDAERMNDIAGAITRLQANWTFLTPSVASLLNPIDVPTLKTLTLGGEAISRDLHSTWADKVRLINSYGPAECSIWTSNQRLFPDSSCADIGAGITCHLWVTEPDNHDRLVPIGCVGELVVQGPNLARGYLKDEEKTAATYIDTPAWLRNDTRSIAKRVYKTGDLVRHCADGHLEFVGRKDTQIKFHGQRVEIGEVEYQLRARLPKNTQVAVEMIKPLSQDGRQTLAGFITTEGGSGHENKGSPSLKGSSGDPVSLLRDPDETFKNIVRKLEHQLAETLPSYMIPSVFISMLNIPRNTSMKIDRKALRTLGANLTREQIATYSFVQGDKRAPRTAMEKRLQECWASVLKISPESIGADDSFFRIGGDSIGAMQLVSAARKTGLSITVGDIFQHQKLSQMANIVARNAAATTEEISIKPFSLLPKQRPDEDLVELAAFKVGIDRTLLQDVYPCTPLQEGLISLTARDHGLYTLQAVYRLPEMINIQEFQLAWLAVTEELDILRTRIVDLGHLGSYQVVISPVISQMRWVYGNSLSTYLREDKEIPVGYGKPLARYAIIEEEEEGEQKKYFVWTAHHSIYDGWSLGLMMDLVEKKYLKTSTIPSPPFNKFIHWLTNLDKAATRQYWKSTFEACSAPQFPSVPQHYRTKAKAAMTYSIRLPQKIDSEITVPTILRTAWALNISQYTRSDDVVFGMTQTGRNAPIPGVTEIVAPLITTVPVRVVFNRSQTVGNVLQEVQNQMVAMIPHEHVGLQNISKFSAECQAASKFENLLLIQTQQDQMVSPIGLERIPVTDLDIPAFGIVAECEVADGQVLVSVGYDSTVVSEKQMTNILRQFDFLVNQIGSESARNTPLVEMHLLGDNEIKMLEALNQSPDDRVSRLAHELIHERAVLQPEAIAIDSQEVQLSYGELDDLSTRLAYFLIDLGTGPDKVIPLFFRRSPWAMVAMLGVIKSGSAFVFLDPGHPIDRLEFVVQQIDAKLVLTSPDLESTWREKLAVFCVSPSALQSLPRLHDGNLPVTAVTPQNILYCIFTSGSTGRPRGCVIEHSNFLSGAVHHARRSRISESTRIMQIAPYTFDVSILEMLTGLIGGGCICLPRDYHQGARVADIINDLNINWTFLTPSVARTIVPSEVPSLQTLILGGEALAKVDIQTWAGKLHLHNGYGPSECSVAVASNEVRDPTIDPANIGSKMGCNIWVVDAENHDILLPIGAVGELLVEGAIVGRGYLQEPEKTAAAFIQDPAWVHYLPNTKSSERRRFYKTGDLVRLNADGTIHFIGRKDTQIKLRGLRIEMGEIEHHASTYRAIRHAVVAVPRAGRMKESIVVVYTLNAYDDSNEQQSDLRPLSNTDLETSQMSPAQLRKHLATHLPPYMVPQTYIGVARLPLLASGKIDRPKLQRWLENMDDATSELIAAQVGKTATHEAGPIDPADKLALALSEPISRLLAGDDEAYLETLKGRNIVLSQSGLNSITVVSMRAMIRDKFNADVSIDRLMESTVTIQDVARMIEHGNTAAGTDKQESAPQLDLLAEVDRMMNSLITEASPDVQTLSQPTPRAERILLTGATGFLGTEILRQLLSNPASTRTVVAIVRARDQDHAMERIVSSAKAAQWWQEEYRSRITPWVGDLAAPRLGLSESQWSTVEGRDHPGSESGSTAGPAEPRIDAIIHNGALVHWGADYHRLRDVNVSSVVSLLAALTRSQAPPTLTFVSGGHVQLDDNETTDEEMAAVLAHSTGYGQSKFVADLVVKRFAARYSTSAVSIVKPGLILGTAQSGVSNTDDFFWRVVATAVEIGGFNAEEPENVILLAGAQQVASIVTDKLQLNLNPARSRSGIPSVETKVRLAITTQELWHMLSDEFGYPMRGMGPAEWLDAMRAAVHAQGESHRLWPVLHFLEAGGGYMGLPVGGCQLQGATGADQESEKEELLASLRKSISYMRQIGYLQSDAPHAVDKVVFGRRNV.

The adenylation 1 stretch occupies residues 257-651 (ERKALEQPHA…VGRKDTQVKI (395 aa)). The Carrier 1 domain occupies 786-862 (EPVTETEKAV…AMSQIAVELS (77 aa)). At Ser-823 the chain carries O-(pantetheine 4'-phosphoryl)serine. Residues 899–1318 (EDAYPATALQ…LVSQKDYTQI (420 aa)) form a condensation 1 region. Residues 1340–1735 (QVLATPDAPA…ARKDTQAKVR (396 aa)) are adenylation 2. The Carrier 2 domain occupies 1877 to 1953 (QPTSDIEKKV…ALAGRAQYIE (77 aa)). An O-(pantetheine 4'-phosphoryl)serine modification is found at Ser-1914. The segment at 1962 to 2384 (PEAEVIDEWF…RQVLETGIDE (423 aa)) is epimerization. The condensation 2 stretch occupies residues 2431–2845 (SPCSPMQLGL…MLSPLDRASL (415 aa)). An adenylation 3 region spans residues 2866–3262 (QNARKRPHAL…VGRKDTQVKV (397 aa)). The Carrier 3 domain occupies 3398–3472 (ALETPMEETI…DMARIVVAAY (75 aa)). O-(pantetheine 4'-phosphoryl)serine is present on Ser-3433. A condensation 3 region spans residues 3510 to 3904 (VEDVYPSTSL…QLCENEDGRL (395 aa)). Residues 3943-4339 (ERARLHPDLL…VGRKDSQVKL (397 aa)) form an adenylation 4 region. The Carrier 4 domain occupies 4476-4552 (VPGSEAEKVI…ELAGRVTSIS (77 aa)). Ser-4513 is modified (O-(pantetheine 4'-phosphoryl)serine). Residues 4601-5033 (VEDVYPCSPL…TSAAMRAQLL (433 aa)) form a condensation 4 region. Positions 5051–5446 (FHRTALRYPE…VGRKDTQIKF (396 aa)) are adenylation 5. Residues 5489–5515 (FITTEGGSGHENKGSPSLKGSSGDPVS) form a disordered region. In terms of domain architecture, Carrier 5 spans 5591–5667 (APRTAMEKRL…QMANIVARNA (77 aa)). An O-(pantetheine 4'-phosphoryl)serine modification is found at Ser-5628. Positions 5707-6123 (QDVYPCTPLQ…HLLGDNEIKM (417 aa)) are condensation 5. The segment at 6145 to 6543 (ERAVLQPEAI…GRKDTQIKLR (399 aa)) is adenylation 6. The Carrier 6 domain maps to 6683-6766 (DPADKLALAL…DVARMIEHGN (84 aa)). O-(pantetheine 4'-phosphoryl)serine is present on Ser-6725. Positions 6814–7194 (ILLTGATGFL…KSISYMRQIG (381 aa)) are thioesterase (TE) domain. The disordered stretch occupies residues 6895–6915 (STVEGRDHPGSESGSTAGPAE).

It belongs to the NRP synthetase family.

It participates in secondary metabolite biosynthesis. Its function is as follows. Nonribosomal peptide synthetase; part of the gene cluster that mediates the biosynthesis of aspercryptins, linear lipopeptides built from six amino acids including 2 highly unusual and nonproteogenic amino acids, 2-amino-octanoic acid (2aoa) and 2-amino-dodecanol (2adol). The core structure of aspercryptins is as follows: Ser/Ala-Thr-Ile/Val-2aoa-Asn-2adol. The first step of aspercryptin biosynthesis is the generation of the fatty acid precursors, octanoic and dodecanoic acids, by the FAS subunits atnF and atnM. The fatty acid precursors are likely transformed into the corresponding alpha-amino fatty acids in three steps. First, they are hydroxylated by the cytochrome P450 monooxygenase atnE, then oxidized to the corresponding alpha-keto acids by the NAD(P)-dependent oxidoreductase atnD, and finally converted to the alpha-amino fatty acids by the PLP-dependent aminotransferases atnH or atnJ. the alpha-amino fatty acids, 2-amino-octanoic and 2-amino-dodecanoic acids, are recognized, activated, and covalently tethered to the NRPS atnA by its fourth and sixth adenylation domains. The second module of atnA is the Thr module and contains an epimerase (E) domain responsible for the epimerization of Thr to D-allo-Thr. Additionally, despite atnA having only one epimerase domain, the first amino acid of aspercryptin A1 is D-Ser, suggesting that serine is either loaded directly as D-Ser on the first module or that the epimerase domain in the threonine module epimerizes both L-Ser and L-Thr. After condensation of the hexapeptide of aspercryptin, the C-terminal reductase (TE) domain might be involved in the reductive release and production of the aldehyde hexapeptide. Further reduction would generate aspercryptins. The variety of aspercryptins produced reflects the flexibility of the atnA NRPS, allowing incorporation of alanine instead of serine, valine for isoleucine, and a C10 fatty amino alcohol instead of the C12 version. AtnB seems to be involved in the selectivity for Ile versus Val by the third module. Moreover, type B, C and D aspercryptins have an additional N-terminal cichorine, acetyl and propionyl group respectively. The polypeptide is Nonribosomal peptide synthetase atnA (Emericella nidulans (strain FGSC A4 / ATCC 38163 / CBS 112.46 / NRRL 194 / M139) (Aspergillus nidulans)).